A 393-amino-acid chain; its full sequence is Epoxyqueuosine reductase (393 aa).

Catalysis depends on Asp-154, which acts as the Proton donor. Positions 196–228 (LPLPVDIPVQEGCHSCVACITSCPTGAIVEPYT) constitute a 4Fe-4S ferredoxin-type domain. [4Fe-4S] cluster contacts are provided by Cys-208, Cys-211, Cys-214, Cys-218, Cys-234, Cys-261, Cys-264, and Cys-268.

This sequence belongs to the QueG family. In terms of assembly, monomer. Requires cob(II)alamin as cofactor. [4Fe-4S] cluster is required as a cofactor.

It localises to the cytoplasm. The enzyme catalyses epoxyqueuosine(34) in tRNA + AH2 = queuosine(34) in tRNA + A + H2O. It functions in the pathway tRNA modification; tRNA-queuosine biosynthesis. Catalyzes the conversion of epoxyqueuosine (oQ) to queuosine (Q), which is a hypermodified base found in the wobble positions of tRNA(Asp), tRNA(Asn), tRNA(His) and tRNA(Tyr). This is Epoxyqueuosine reductase from Shewanella oneidensis (strain ATCC 700550 / JCM 31522 / CIP 106686 / LMG 19005 / NCIMB 14063 / MR-1).